Here is a 576-residue protein sequence, read N- to C-terminus: Polypeptide N-acetylgalactosaminyltransferase 12 (576 aa).

Topologically, residues 1–19 (MWGRAVRRRCPRGLRRGRE) are cytoplasmic. A helical; Signal-anchor for type II membrane protein transmembrane segment spans residues 20–37 (ALLALLALAGLGALLRAR). The tract at residues 38-58 (SRSGTVDPGPPRTPLPGRHEP) is disordered. Topologically, residues 38–576 (SRSGTVDPGP…QRWFFKERMS (539 aa)) are lumenal. 5 cysteine pairs are disulfide-bonded: cysteine 120/cysteine 353, cysteine 344/cysteine 417, cysteine 453/cysteine 474, cysteine 501/cysteine 516, and cysteine 542/cysteine 561. The segment at 130–239 (LPKTSVVIAF…EGWLEPLLQR (110 aa)) is catalytic subdomain A. Residues aspartate 171 and arginine 200 each coordinate substrate. Aspartate 223 and histidine 225 together coordinate Mn(2+). The tract at residues 299–361 (VIRSPTMAGG…PCSHVGHVFP (63 aa)) is catalytic subdomain B. Substrate is bound at residue tryptophan 330. Residue histidine 358 coordinates Mn(2+). Tyrosine 366 contacts substrate. The region spanning 440–572 (FFGMLQNRGL…NSDNQRWFFK (133 aa)) is the Ricin B-type lectin domain.

Belongs to the glycosyltransferase 2 family. GalNAc-T subfamily. The cofactor is Mn(2+).

Its subcellular location is the golgi apparatus membrane. The catalysed reaction is L-seryl-[protein] + UDP-N-acetyl-alpha-D-galactosamine = a 3-O-[N-acetyl-alpha-D-galactosaminyl]-L-seryl-[protein] + UDP + H(+). It carries out the reaction L-threonyl-[protein] + UDP-N-acetyl-alpha-D-galactosamine = a 3-O-[N-acetyl-alpha-D-galactosaminyl]-L-threonyl-[protein] + UDP + H(+). It participates in protein modification; protein glycosylation. Catalyzes the initial reaction in O-linked oligosaccharide biosynthesis, the transfer of an N-acetyl-D-galactosamine residue to a serine or threonine residue on the protein receptor. Has activity toward non-glycosylated peptides such as Muc5AC, Muc1a and EA2, and no detectable activity with Muc2 and Muc7. Displays enzymatic activity toward the Gal-NAc-Muc5AC glycopeptide, but no detectable activity to mono-GalNAc-glycosylated Muc1a, Muc2, Muc7 and EA2. May play an important role in the initial step of mucin-type oligosaccharide biosynthesis in digestive organs. This is Polypeptide N-acetylgalactosaminyltransferase 12 (Galnt12) from Mus musculus (Mouse).